Consider the following 343-residue polypeptide: Polyprenal reductase 2 (343 aa).

The next 6 helical transmembrane spans lie at 12-32 (GAWI…SIPT), 66-86 (FAHF…ATWM), 164-184 (MHIL…LSLC), 223-243 (PLMK…WGWI), 266-286 (IIPY…AEIV), and 291-311 (LLIA…FVAA).

Belongs to the steroid 5-alpha reductase family. Polyprenal reductase subfamily. In terms of tissue distribution, expressed in roots, leaves, stems and flowers.

The protein localises to the endoplasmic reticulum membrane. The enzyme catalyses a di-trans,poly-cis-dolichal + NADP(+) = a di-trans,poly-cis-polyprenal + NADPH + H(+). It functions in the pathway protein modification; protein glycosylation. Plays a key role in early steps of protein N-linked glycosylation by being involved in the conversion of polyprenol into dolichol. Acts as a polyprenal reductase that mediates the reduction of polyprenal into dolichal in a NADP-dependent mechanism. Dolichols are required for the synthesis of dolichol-linked monosaccharides and the oligosaccharide precursor used for N-glycosylation. Involved in the regulation of plant growth and reproductive processes. This Arabidopsis thaliana (Mouse-ear cress) protein is Polyprenal reductase 2.